The chain runs to 1005 residues: Isoleucine--tRNA ligase (1005 aa).

The 'HIGH' region motif lies at 70–80 (PYANGNIHIGH). Glu-629 contributes to the L-isoleucyl-5'-AMP binding site. Positions 670–674 (KMSKS) match the 'KMSKS' region motif. Lys-673 contacts ATP.

This sequence belongs to the class-I aminoacyl-tRNA synthetase family. IleS type 1 subfamily. As to quaternary structure, monomer.

The protein resides in the cytoplasm. It catalyses the reaction tRNA(Ile) + L-isoleucine + ATP = L-isoleucyl-tRNA(Ile) + AMP + diphosphate. Functionally, catalyzes the attachment of isoleucine to tRNA(Ile). As IleRS can inadvertently accommodate and process structurally similar amino acids such as valine, to avoid such errors it has two additional distinct tRNA(Ile)-dependent editing activities. One activity is designated as 'pretransfer' editing and involves the hydrolysis of activated Val-AMP. The other activity is designated 'posttransfer' editing and involves deacylation of mischarged Val-tRNA(Ile). In Rhodopseudomonas palustris (strain ATCC BAA-98 / CGA009), this protein is Isoleucine--tRNA ligase.